A 402-amino-acid polypeptide reads, in one-letter code: Elongation factor Tu (402 aa).

In terms of domain architecture, tr-type G spans 10–212; it reads KPHVNIGTIG…AVDEYIPTPE (203 aa). Residues 19-26 form a G1 region; sequence GHVDHGKT. GTP is bound at residue 19–26; that stretch reads GHVDHGKT. A Mg(2+)-binding site is contributed by threonine 26. Residues 60–64 form a G2 region; sequence GITIA. The interval 81 to 84 is G3; that stretch reads DCPG. GTP-binding positions include 81–85 and 136–139; these read DCPGH and NKED. The tract at residues 136–139 is G4; it reads NKED. Residues 177-179 form a G5 region; it reads SAF.

The protein belongs to the TRAFAC class translation factor GTPase superfamily. Classic translation factor GTPase family. EF-Tu/EF-1A subfamily. Monomer.

It is found in the cytoplasm. The enzyme catalyses GTP + H2O = GDP + phosphate + H(+). Its function is as follows. GTP hydrolase that promotes the GTP-dependent binding of aminoacyl-tRNA to the A-site of ribosomes during protein biosynthesis. This Aliarcobacter butzleri (strain RM4018) (Arcobacter butzleri) protein is Elongation factor Tu.